The chain runs to 276 residues: MSWLQVVVLSVLQGLTEFLPVSSSGHLAIASRVFFEDDAGASFTAVCQLGTEAAVLVYFARDIARILKAWFAGLFGSGERSPDYWLGWWVIIGTIPISVIGLLFKDEIRTGARNLWLVATAMIVFSFVIAAAEYAGRQTRRVEQLTWRDSVIVGFAQCLALVPGVSRSGATISAGLFLGMDRELAARFGFLLAIPAVFASGLFSLPDAFAPVGEGMSATGPQLLVSTVIAFVVGYAAVAWFLRFLVRHSMYWFVGYRIILGSVVLILLSTGVVAAI.

8 consecutive transmembrane segments (helical) span residues 1–21 (MSWL…FLPV), 39–59 (AGAS…LVYF), 84–104 (YWLG…GLLF), 115–135 (LWLV…AEYA), 159–179 (LALV…LFLG), 190–210 (FLLA…DAFA), 222–242 (QLLV…AWFL), and 253–273 (FVGY…TGVV).

It belongs to the UppP family.

It localises to the cell membrane. The catalysed reaction is di-trans,octa-cis-undecaprenyl diphosphate + H2O = di-trans,octa-cis-undecaprenyl phosphate + phosphate + H(+). In terms of biological role, catalyzes the dephosphorylation of undecaprenyl diphosphate (UPP). Confers resistance to bacitracin. This chain is Undecaprenyl-diphosphatase, found in Mycolicibacterium gilvum (strain PYR-GCK) (Mycobacterium gilvum (strain PYR-GCK)).